Consider the following 562-residue polypeptide: Glutamate--tRNA ligase (562 aa).

Residues 101-111 carry the 'HIGH' region motif; that stretch reads PEPNGYPHIGH.

The protein belongs to the class-I aminoacyl-tRNA synthetase family. Glutamate--tRNA ligase type 2 subfamily.

The protein resides in the cytoplasm. It catalyses the reaction tRNA(Glu) + L-glutamate + ATP = L-glutamyl-tRNA(Glu) + AMP + diphosphate. Its function is as follows. Catalyzes the attachment of glutamate to tRNA(Glu) in a two-step reaction: glutamate is first activated by ATP to form Glu-AMP and then transferred to the acceptor end of tRNA(Glu). This Cenarchaeum symbiosum (strain A) protein is Glutamate--tRNA ligase.